We begin with the raw amino-acid sequence, 500 residues long: Aspartyl/glutamyl-tRNA(Asn/Gln) amidotransferase subunit B (500 aa).

The protein belongs to the GatB/GatE family. GatB subfamily. In terms of assembly, heterotrimer of A, B and C subunits.

It catalyses the reaction L-glutamyl-tRNA(Gln) + L-glutamine + ATP + H2O = L-glutaminyl-tRNA(Gln) + L-glutamate + ADP + phosphate + H(+). The catalysed reaction is L-aspartyl-tRNA(Asn) + L-glutamine + ATP + H2O = L-asparaginyl-tRNA(Asn) + L-glutamate + ADP + phosphate + 2 H(+). Functionally, allows the formation of correctly charged Asn-tRNA(Asn) or Gln-tRNA(Gln) through the transamidation of misacylated Asp-tRNA(Asn) or Glu-tRNA(Gln) in organisms which lack either or both of asparaginyl-tRNA or glutaminyl-tRNA synthetases. The reaction takes place in the presence of glutamine and ATP through an activated phospho-Asp-tRNA(Asn) or phospho-Glu-tRNA(Gln). The sequence is that of Aspartyl/glutamyl-tRNA(Asn/Gln) amidotransferase subunit B from Rhizobium etli (strain CIAT 652).